We begin with the raw amino-acid sequence, 121 residues long: ATP synthase epsilon chain (121 aa).

The protein belongs to the ATPase epsilon chain family. F-type ATPases have 2 components, CF(1) - the catalytic core - and CF(0) - the membrane proton channel. CF(1) has five subunits: alpha(3), beta(3), gamma(1), delta(1), epsilon(1). CF(0) has three main subunits: a, b and c.

It is found in the cell membrane. Produces ATP from ADP in the presence of a proton gradient across the membrane. In Mycobacterium marinum (strain ATCC BAA-535 / M), this protein is ATP synthase epsilon chain.